The following is a 987-amino-acid chain: Ephrin type-B receptor 4 (987 aa).

The signal sequence occupies residues 1–15 (MELRALLCWASLATA). Over 16–539 (LEETLLNTKL…ESESWREQLA (524 aa)) the chain is Extracellular. The region spanning 17–202 (EETLLNTKLE…FYKKCSWLIT (186 aa)) is the Eph LBD domain. 2 disulfides stabilise this stretch: Cys61-Cys184 and Cys97-Cys107. N-linked (GlcNAc...) asparagine glycosylation is found at Asn203, Asn335, and Asn426. Fibronectin type-III domains are found at residues 323–432 (PPSA…TDRE) and 436–529 (AVSD…TQLD). A helical transmembrane segment spans residues 540–560 (LIAGTAVVGVVLVLVVVIIAV). The Cytoplasmic segment spans residues 561-987 (LCLRKQSNGR…GGTGGPAQQF (427 aa)). Residues 615 to 899 (VKIEEVIGAG…ENGGASHPLL (285 aa)) form the Protein kinase domain. ATP-binding positions include 621-629 (IGAGEFGEV) and Lys647. Asp740 acts as the Proton acceptor in catalysis. Phosphoserine is present on residues Ser769, Ser770, Ser911, and Ser943. Residues 907–971 (SAFGSVGEWL…LASVQHMKSQ (65 aa)) form the SAM domain. The disordered stretch occupies residues 965–987 (VQHMKSQAKPGAPGGTGGPAQQF). The segment covering 976–987 (APGGTGGPAQQF) has biased composition (gly residues). Residues 985–987 (QQF) carry the PDZ-binding motif.

The protein belongs to the protein kinase superfamily. Tyr protein kinase family. Ephrin receptor subfamily. As to quaternary structure, heterotetramer upon binding of the ligand. The heterotetramer is composed of an ephrin dimer and a receptor dimer. Oligomerization is probably required to induce biological responses. Interacts with RASA1; the interaction depends on EPHB4 tyrosine-phosphorylation. In terms of processing, phosphorylated; autophosphorylation is stimulated by EFNB2. Expressed in various organ systems, including lung, liver, kidney, intestine, muscle and heart. Expressed in myogenic progenitor cells.

It is found in the cell membrane. It carries out the reaction L-tyrosyl-[protein] + ATP = O-phospho-L-tyrosyl-[protein] + ADP + H(+). Receptor tyrosine kinase which binds promiscuously transmembrane ephrin-B family ligands residing on adjacent cells, leading to contact-dependent bidirectional signaling into neighboring cells. The signaling pathway downstream of the receptor is referred to as forward signaling while the signaling pathway downstream of the ephrin ligand is referred to as reverse signaling. Together with its cognate ligand/functional ligand EFNB2 it is involved in the regulation of cell adhesion and migration, and plays a central role in heart morphogenesis, angiogenesis and blood vessel remodeling and permeability. EPHB4-mediated forward signaling controls cellular repulsion and segregation from EFNB2-expressing cells. The polypeptide is Ephrin type-B receptor 4 (Ephb4) (Mus musculus (Mouse)).